The primary structure comprises 357 residues: uncharacterized protein (357 aa).

The zn(2)-C6 fungal-type DNA-binding region spans 6 to 32; that stretch reads CIVCRQKKIKCDRKNPCTNCEQAGEKC.

It localises to the nucleus. This is an uncharacterized protein from Schizosaccharomyces pombe (strain 972 / ATCC 24843) (Fission yeast).